The chain runs to 440 residues: Beta-1,3-galactosyl-O-glycosyl-glycoprotein beta-1,6-N-acetylglucosaminyltransferase 3 (440 aa).

Residues 1 to 12 (MKMTGWKKKLCR) lie on the Cytoplasmic side of the membrane. Residues 13–30 (GHHLWALGCYSLLAVVAL) form a helical; Signal-anchor for type II membrane protein membrane-spanning segment. The Lumenal segment spans residues 31–440 (RLSLRLKCDV…RHKAIYGTEL (410 aa)). Cystine bridges form between cysteine 73-cysteine 230, cysteine 164-cysteine 384, cysteine 185-cysteine 212, and cysteine 393-cysteine 425. Residue asparagine 108 is glycosylated (N-linked (GlcNAc...) asparagine).

It belongs to the glycosyltransferase 14 family. In terms of processing, N-glycosylated.

The protein resides in the golgi apparatus membrane. The catalysed reaction is a 3-O-[beta-D-galactosyl-(1-&gt;3)-N-acetyl-alpha-D-galactosaminyl]-L-seryl-[protein] + UDP-N-acetyl-alpha-D-glucosamine = 3-O-{beta-D-galactosyl-(1-&gt;3)-[N-acetyl-beta-D-glucosaminyl-(1-&gt;6)]-N-acetyl-alpha-D-galactosaminyl}-L-seryl-[protein] + UDP + H(+). It catalyses the reaction a 3-O-[beta-D-galactosyl-(1-&gt;3)-N-acetyl-alpha-D-galactosaminyl]-L-threonyl-[protein] + UDP-N-acetyl-alpha-D-glucosamine = a 3-O-{beta-D-galactosyl-(1-&gt;3)-[N-acetyl-beta-D-glucosaminyl-(1-&gt;6)]-N-acetyl-alpha-D-galactosaminyl}-L-threonyl-[protein] + UDP + H(+). The enzyme catalyses a beta-D-Gal-(1-&gt;4)-beta-D-GlcNAc-(1-&gt;3)-beta-D-Gal-(1-&gt;4)-beta-D-GlcNAc derivative + UDP-N-acetyl-alpha-D-glucosamine = a beta-D-Gal-(1-&gt;4)-beta-D-GlcNAc-(1-&gt;3)-[beta-D-GlcNAc-(1-&gt;6)]-beta-D-Gal-(1-&gt;4)-N-acetyl-beta-D-glucosaminyl derivative + UDP + H(+). It carries out the reaction 3-O-[N-acetyl-beta-D-glucosaminyl-(1-&gt;3)-N-acetyl-alpha-D-galactosaminyl]-L-seryl-[protein] + UDP-N-acetyl-alpha-D-glucosamine = 3-O-[N-acetyl-beta-D-glucosaminyl-(1-&gt;3)-[N-acetyl-beta-D-glucosaminyl-(1-&gt;6)]-N-acetyl-alpha-D-galactosaminyl]-L-seryl-[protein] + UDP + H(+). The catalysed reaction is a 3-O-[N-acetyl-beta-D-glucosaminyl-(1-&gt;3)-N-acetyl-alpha-D-galactosaminyl]-L-threonyl-[protein] + UDP-N-acetyl-alpha-D-glucosamine = 3-O-[N-acetyl-beta-D-glucosaminyl-(1-&gt;3)-[N-acetyl-beta-D-glucosaminyl-(1-&gt;6)]-N-acetyl-alpha-D-galactosaminyl]-L-threonyl-[protein] + UDP + H(+). It participates in protein modification; protein glycosylation. Glycosyltransferase that can synthesize all known mucin beta 6 N-acetylglucosaminides. Mediates core 2 and core 4 O-glycan branching, 2 important steps in mucin-type biosynthesis. Also has I-branching enzyme activity by converting linear into branched poly-N-acetyllactosaminoglycans, leading to introduce the blood group I antigen during embryonic development. The sequence is that of Beta-1,3-galactosyl-O-glycosyl-glycoprotein beta-1,6-N-acetylglucosaminyltransferase 3 (GCNT3) from Bos mutus grunniens (Wild yak).